The sequence spans 340 residues: MALLKKRKHERSEQDQEYFQCYSDVSIHEEMIADTVRTNGYKQAILHNHCALQGLTVLDVGAGTGILSVFCVQAGATRVYAVEASAVSQLASHVVTLNGMDNKVKVLNSPVESAEIPEQVDAIVSEWMGYALMYESMLPSVIYARDKWLKPGGIILPSAADLFIAPINDRVVESRLDFWNEVKGLYGVDMSCMRPFAHSCIMNKEMAVNLLSPEDVLSFPVRFASLDLNVCTQEEVRNLHGSFQFSCFGSSLLHGFALWFTVTFPGEKTVTLSTSPYGEETHWKQTLLYLDEEIQVEQDTDITGDITLSPSDVNPRHLRALLNYSIGGGLRRTKHFHMGT.

One can recognise an SAM-dependent MTase PRMT-type domain in the interval 15–339 (DQEYFQCYSD…LRRTKHFHMG (325 aa)). S-adenosyl-L-methionine contacts are provided by His28, Arg37, Gly61, Glu83, and Glu112. Active-site residues include Glu126 and Glu135.

The protein belongs to the class I-like SAM-binding methyltransferase superfamily. Protein arginine N-methyltransferase family. PRMT6 subfamily.

Its subcellular location is the nucleus. It carries out the reaction L-arginyl-[protein] + 2 S-adenosyl-L-methionine = N(omega),N(omega)-dimethyl-L-arginyl-[protein] + 2 S-adenosyl-L-homocysteine + 2 H(+). Functionally, arginine methyltransferase that can catalyze the formation of both omega-N monomethylarginine (MMA) and asymmetrical dimethylarginine (aDMA), with a strong preference for the formation of aDMA. Preferentially methylates arginyl residues present in a glycine and arginine-rich domain and displays preference for monomethylated substrates. Specifically mediates the asymmetric dimethylation of histone H3 'Arg-2' to form H3R2me2a. H3R2me2a represents a specific tag for epigenetic transcriptional repression and is mutually exclusive with methylation on histone H3 'Lys-4' (H3K4me2 and H3K4me3). Acts as a transcriptional repressor of various genes such as HOXA2, THBS1 and TP53. Repression of TP53 blocks cellular senescence. Also methylates histone H2A and H4 'Arg-3' (H2AR3me and H4R3me, respectively). Acts as a regulator of DNA base excision during DNA repair by mediating the methylation of DNA polymerase beta (POLB), leading to the stimulation of its polymerase activity by enhancing DNA binding and processivity. Methylates HMGA1. Regulates alternative splicing events. Acts as a transcriptional coactivator of a number of steroid hormone receptors including ESR1, ESR2, PGR and NR3C1. The chain is Protein arginine N-methyltransferase 6 (prmt6) from Xenopus laevis (African clawed frog).